Reading from the N-terminus, the 326-residue chain is tRNA-modifying protein YgfZ (326 aa).

Folate-binding residues include Trp-27 and Trp-189.

It belongs to the tRNA-modifying YgfZ family.

It is found in the cytoplasm. Functionally, folate-binding protein involved in regulating the level of ATP-DnaA and in the modification of some tRNAs. It is probably a key factor in regulatory networks that act via tRNA modification, such as initiation of chromosomal replication. This is tRNA-modifying protein YgfZ from Salmonella arizonae (strain ATCC BAA-731 / CDC346-86 / RSK2980).